The sequence spans 689 residues: Elongation factor G (689 aa).

The tr-type G domain occupies 8-282; that stretch reads ERTRNIGIMA…AVVDYLPAPT (275 aa). Residues 17–24, 81–85, and 135–138 contribute to the GTP site; these read AHIDAGKT, DTPGH, and NKMD.

Belongs to the TRAFAC class translation factor GTPase superfamily. Classic translation factor GTPase family. EF-G/EF-2 subfamily.

The protein localises to the cytoplasm. Catalyzes the GTP-dependent ribosomal translocation step during translation elongation. During this step, the ribosome changes from the pre-translocational (PRE) to the post-translocational (POST) state as the newly formed A-site-bound peptidyl-tRNA and P-site-bound deacylated tRNA move to the P and E sites, respectively. Catalyzes the coordinated movement of the two tRNA molecules, the mRNA and conformational changes in the ribosome. This chain is Elongation factor G, found in Desulforudis audaxviator (strain MP104C).